Consider the following 305-residue polypeptide: Tyrosine recombinase XerC (305 aa).

Residues 4–95 (TQIQELIIKW…AIKNFYKFLE (92 aa)) form the Core-binding (CB) domain. The 183-residue stretch at 116 to 298 (LLPKALSEEE…SIKHLETAYV (183 aa)) folds into the Tyr recombinase domain. Residues R159, K182, H250, R253, and H276 contribute to the active site. Y285 (O-(3'-phospho-DNA)-tyrosine intermediate) is an active-site residue.

This sequence belongs to the 'phage' integrase family. XerC subfamily. Forms a cyclic heterotetrameric complex composed of two molecules of XerC and two molecules of XerD.

The protein resides in the cytoplasm. In terms of biological role, site-specific tyrosine recombinase, which acts by catalyzing the cutting and rejoining of the recombining DNA molecules. The XerC-XerD complex is essential to convert dimers of the bacterial chromosome into monomers to permit their segregation at cell division. It also contributes to the segregational stability of plasmids. In Rickettsia bellii (strain RML369-C), this protein is Tyrosine recombinase XerC.